Here is a 376-residue protein sequence, read N- to C-terminus: Dual-specificity RNA methyltransferase RlmN (376 aa).

Catalysis depends on glutamate 96, which acts as the Proton acceptor. Positions 102–341 constitute a Radical SAM core domain; it reads DEDRATLCVS…VVVRKTRGDD (240 aa). Cysteine 109 and cysteine 346 are disulfide-bonded. Cysteine 116, cysteine 120, and cysteine 123 together coordinate [4Fe-4S] cluster. Residues 170–171, serine 202, 224–226, and asparagine 303 contribute to the S-adenosyl-L-methionine site; these read GE and SLH. The active-site S-methylcysteine intermediate is cysteine 346.

This sequence belongs to the radical SAM superfamily. RlmN family. The cofactor is [4Fe-4S] cluster.

The protein resides in the cytoplasm. The enzyme catalyses adenosine(2503) in 23S rRNA + 2 reduced [2Fe-2S]-[ferredoxin] + 2 S-adenosyl-L-methionine = 2-methyladenosine(2503) in 23S rRNA + 5'-deoxyadenosine + L-methionine + 2 oxidized [2Fe-2S]-[ferredoxin] + S-adenosyl-L-homocysteine. The catalysed reaction is adenosine(37) in tRNA + 2 reduced [2Fe-2S]-[ferredoxin] + 2 S-adenosyl-L-methionine = 2-methyladenosine(37) in tRNA + 5'-deoxyadenosine + L-methionine + 2 oxidized [2Fe-2S]-[ferredoxin] + S-adenosyl-L-homocysteine. Functionally, specifically methylates position 2 of adenine 2503 in 23S rRNA and position 2 of adenine 37 in tRNAs. m2A2503 modification seems to play a crucial role in the proofreading step occurring at the peptidyl transferase center and thus would serve to optimize ribosomal fidelity. The sequence is that of Dual-specificity RNA methyltransferase RlmN from Pseudoalteromonas atlantica (strain T6c / ATCC BAA-1087).